Here is a 647-residue protein sequence, read N- to C-terminus: XK-related protein 4 (647 aa).

Over residues 1 to 15 (MAAKSDGRLKMKKSS) the composition is skewed to basic and acidic residues. Positions 1–44 (MAAKSDGRLKMKKSSDVAFTPLQNSDNSGSVQGLAPGLPSGSGA) are disordered. Positions 21–31 (PLQNSDNSGSV) are enriched in polar residues. 2 helical membrane-spanning segments follow: residues 112-132 (WILA…WLAV) and 142-162 (WFGL…VFSF). Residue Ser197 is modified to Phosphoserine. A disordered region spans residues 197–238 (SAAGEGEVRPSTPQRQASNASKSNIAATNSGSNSNGATRTSG). Residues 207–236 (STPQRQASNASKSNIAATNSGSNSNGATRT) show a composition bias toward polar residues. The next 8 membrane-spanning stretches (helical) occupy residues 245–265 (CSFC…GQIW), 303–323 (HLLA…CIIV), 328–348 (LQAL…WALA), 362–382 (KPIS…TIAA), 393–415 (VFQL…WIVH), 425–445 (WEEI…WFNV), 454–474 (LFIY…LWYL), and 484–504 (FAIP…VFML).

This sequence belongs to the XK family. As to quaternary structure, homodimer; homodimerization takes place upon caspase cleavage. Interacts with the processed C-terminus of XRCC4 (protein XRCC4, C-terminus); interaction promotes the phospholipid scramblase activity. Post-translationally, undergoes proteolytic processing by caspase-3 (CASP3), caspase-6 (CASP6) and caspase-7 (CASP7) to generate the XK-related protein 4, processed form, leading to its activation. In terms of tissue distribution, highly expressed in expressed in the brain; weakly expressed in the spleen, thymus, uterus, blood vessels and fetus.

It localises to the cell membrane. The enzyme catalyses a 1,2-diacyl-sn-glycero-3-phospho-L-serine(in) = a 1,2-diacyl-sn-glycero-3-phospho-L-serine(out). Phospholipid scramblase activity is activated upon caspase cleavage to generate the XK-related protein 4, processed form. Does not act prior the onset of apoptosis. Its activity is regulated as follows. Homodimerizes upon caspase cleavage. Phospholipid scramblase activity is activated following interaction with the processed C-terminus of XRCC4 (protein XRCC4, C-terminus). Functionally, phospholipid scramblase that promotes phosphatidylserine exposure on apoptotic cell surface. Phosphatidylserine is a specific marker only present at the surface of apoptotic cells and acts as a specific signal for engulfment. This is XK-related protein 4 from Mus musculus (Mouse).